A 105-amino-acid polypeptide reads, in one-letter code: Probable tetrachloroethene reductive dehalogenase membrane anchor protein (105 aa).

3 helical membrane passes run 3-23 (IYDV…QYGI), 35-55 (IPLQ…LAWG), and 66-86 (AIGM…IITY).

It belongs to the PceB family.

The protein resides in the cell membrane. In terms of biological role, may act as a membrane anchor for the tetrachloroethene reductive dehalogenase PceA. This chain is Probable tetrachloroethene reductive dehalogenase membrane anchor protein, found in Dehalobacter restrictus (strain DSM 9455 / PER-K23).